Here is a 214-residue protein sequence, read N- to C-terminus: RNA-free ribonuclease P (214 aa).

The protein belongs to the HARP family.

The enzyme catalyses Endonucleolytic cleavage of RNA, removing 5'-extranucleotides from tRNA precursor.. RNA-free RNase P that catalyzes the removal of the 5'-leader sequence from pre-tRNA to produce the mature 5'-terminus. This Aeropyrum pernix (strain ATCC 700893 / DSM 11879 / JCM 9820 / NBRC 100138 / K1) protein is RNA-free ribonuclease P.